The primary structure comprises 634 residues: Probable potassium transport system protein Kup (634 aa).

Transmembrane regions (helical) follow at residues 19–39 (AVGL…TSPL), 62–82 (VLSL…VIFV), 113–133 (FVVV…MITP), 150–170 (GLEH…FLIQ), 177–197 (IGIL…ALGV), 225–245 (IGVA…ALYA), 259–279 (WFLL…ATIL), 291–311 (LLAP…ATVI), 349–369 (IYIG…VLGF), 379–399 (YGVA…VVIW), 406–426 (LWLG…FFAA), and 431–451 (VVQG…LMST).

The protein belongs to the HAK/KUP transporter (TC 2.A.72) family.

The protein resides in the cell inner membrane. The catalysed reaction is K(+)(in) + H(+)(in) = K(+)(out) + H(+)(out). Transport of potassium into the cell. Likely operates as a K(+):H(+) symporter. The chain is Probable potassium transport system protein Kup from Pseudomonas paraeruginosa (strain DSM 24068 / PA7) (Pseudomonas aeruginosa (strain PA7)).